Here is a 355-residue protein sequence, read N- to C-terminus: 3-dehydroquinate synthase (355 aa).

NAD(+) contacts are provided by residues 105–109 (GVVGD), 129–130 (TS), Lys142, Lys151, and 169–172 (TLKT). Zn(2+) is bound by residues Glu184, His246, and His263.

The protein belongs to the sugar phosphate cyclases superfamily. Dehydroquinate synthase family. Co(2+) is required as a cofactor. It depends on Zn(2+) as a cofactor. The cofactor is NAD(+).

The protein localises to the cytoplasm. The enzyme catalyses 7-phospho-2-dehydro-3-deoxy-D-arabino-heptonate = 3-dehydroquinate + phosphate. Its pathway is metabolic intermediate biosynthesis; chorismate biosynthesis; chorismate from D-erythrose 4-phosphate and phosphoenolpyruvate: step 2/7. Its function is as follows. Catalyzes the conversion of 3-deoxy-D-arabino-heptulosonate 7-phosphate (DAHP) to dehydroquinate (DHQ). The polypeptide is 3-dehydroquinate synthase (Streptococcus agalactiae serotype Ia (strain ATCC 27591 / A909 / CDC SS700)).